The primary structure comprises 277 residues: MAALGRPFSGLPLSGSADFLQPPPAFAGRAFPPGAAGHDLAPRPGVRGAPSSPGGRTARGRVSIHCRKKHKRLAEDDECPVRKKRLTEAELGAVTDEWALGAHQGREGHGVNTCPSSLSMPSMLDVVCEEMDQTTGEPQCEVARRRLQEIEDRIIDEDEEVESDRNVSHLPSLVLSDTMKTGLKREFDEVFTKRMIESMSRPSMELVLWKPLPELLPEKPKPSSSPKNYRRESQAKHAAPGTAFPQRTEGLLEPQCADAPLYRSLEAATSTEEEMEL.

The tract at residues 1–69 is disordered; the sequence is MAALGRPFSG…GRVSIHCRKK (69 aa). Residues 26–37 show a composition bias toward low complexity; it reads FAGRAFPPGAAG. Arginine 47 is modified (omega-N-methylarginine). Serine 52 carries the phosphoserine modification. Over residues 58–69 the composition is skewed to basic residues; it reads ARGRVSIHCRKK. A coiled-coil region spans residues 139–166; that stretch reads QCEVARRRLQEIEDRIIDEDEEVESDRN. The segment at 212–277 is disordered; it reads LPELLPEKPK…ATSTEEEMEL (66 aa).

In terms of assembly, interacts with CIAO2B; the interaction is direct. Interacts with MMS19; the interaction is indirect.

The protein resides in the cytoplasm. It is found in the cytoskeleton. The protein localises to the spindle. It localises to the nucleus. Functionally, facilitates DNA repair, cell cycle progression, and cell proliferation through its interaction with CIAO2B. The sequence is that of Coiled-coil domain-containing protein 117 from Mus musculus (Mouse).